A 311-amino-acid polypeptide reads, in one-letter code: Malate dehydrogenase (311 aa).

NAD(+)-binding positions include 7-13 (GAAGGIG) and Asp34. Arg81 and Arg87 together coordinate substrate. NAD(+) is bound by residues Asn94 and 117–119 (ITN). Residues Asn119 and Arg153 each coordinate substrate. His177 serves as the catalytic Proton acceptor. Met227 is an NAD(+) binding site.

Belongs to the LDH/MDH superfamily. MDH type 1 family. Homodimer.

It catalyses the reaction (S)-malate + NAD(+) = oxaloacetate + NADH + H(+). In terms of biological role, catalyzes the reversible oxidation of malate to oxaloacetate. In Shewanella halifaxensis (strain HAW-EB4), this protein is Malate dehydrogenase.